Reading from the N-terminus, the 302-residue chain is Uricase (302 aa).

Residues lysine 22 and threonine 67 each act as charge relay system in the active site. Positions 67, 68, 163, 180, 223, and 249 each coordinate urate. The active-site Charge relay system is the histidine 251.

The protein belongs to the uricase family. As to quaternary structure, homotetramer.

It carries out the reaction urate + O2 + H2O = 5-hydroxyisourate + H2O2. It functions in the pathway purine metabolism; urate degradation; (S)-allantoin from urate: step 1/3. Catalyzes the oxidation of uric acid to 5-hydroxyisourate, which is further processed to form (S)-allantoin. In Arthrobacter globiformis, this protein is Uricase (uox).